Here is a 506-residue protein sequence, read N- to C-terminus: Glutamate--tRNA ligase (506 aa).

A 'HIGH' region motif is present at residues 21–31 (PSPTGTPHVGM). The short motif at 265-269 (KLSKR) is the 'KMSKS' region element. Residue lysine 268 participates in ATP binding.

Belongs to the class-I aminoacyl-tRNA synthetase family. Glutamate--tRNA ligase type 1 subfamily. As to quaternary structure, monomer.

Its subcellular location is the cytoplasm. The catalysed reaction is tRNA(Glu) + L-glutamate + ATP = L-glutamyl-tRNA(Glu) + AMP + diphosphate. Catalyzes the attachment of glutamate to tRNA(Glu) in a two-step reaction: glutamate is first activated by ATP to form Glu-AMP and then transferred to the acceptor end of tRNA(Glu). This chain is Glutamate--tRNA ligase, found in Bifidobacterium longum (strain DJO10A).